A 243-amino-acid chain; its full sequence is MTPEEFKKALEDKGYQISDHQMAQFATYYKMLVETNEHVNLTAITEENEVYLKHFYDSVTPLLEAPEYFKSGAELCDVGAGAGFPSLPMKILFPSLKVTIVDSLNKRITFLKTLVDQLELTDVTLVHDRAETFGAKKSVYREKFEIVTARAVARLSVLSELCIPLVKQNGFFIALKAANTEQELSDGKMAIAILGGKLIVDKDFALPATGDERHLVVVEKKKQTPNKYPRKPGTPGKDPIGKK.

S-adenosyl-L-methionine-binding positions include Gly-79, Phe-84, 130 to 131 (AE), and Arg-150. The segment at 219 to 243 (EKKKQTPNKYPRKPGTPGKDPIGKK) is disordered.

This sequence belongs to the methyltransferase superfamily. RNA methyltransferase RsmG family.

The protein resides in the cytoplasm. Specifically methylates the N7 position of a guanine in 16S rRNA. The protein is Ribosomal RNA small subunit methyltransferase G of Pediococcus pentosaceus (strain ATCC 25745 / CCUG 21536 / LMG 10740 / 183-1w).